A 187-amino-acid polypeptide reads, in one-letter code: Elongation factor P (187 aa).

The protein belongs to the elongation factor P family.

It localises to the cytoplasm. The protein operates within protein biosynthesis; polypeptide chain elongation. In terms of biological role, involved in peptide bond synthesis. Stimulates efficient translation and peptide-bond synthesis on native or reconstituted 70S ribosomes in vitro. Probably functions indirectly by altering the affinity of the ribosome for aminoacyl-tRNA, thus increasing their reactivity as acceptors for peptidyl transferase. The protein is Elongation factor P of Syntrophus aciditrophicus (strain SB).